The following is a 291-amino-acid chain: Polyamine aminopropyltransferase (291 aa).

One can recognise a PABS domain in the interval 5 to 245 (PGPVSLIEPL…YAVNYIIGSL (241 aa)). Gln36 is an S-methyl-5'-thioadenosine binding site. Residues His67 and Glu91 each contribute to the spermidine site. S-methyl-5'-thioadenosine is bound by residues Asp111 and 143-144 (DG). The active-site Proton acceptor is the Asp164.

This sequence belongs to the spermidine/spermine synthase family. Homodimer or homotetramer.

Its subcellular location is the cytoplasm. It catalyses the reaction S-adenosyl 3-(methylsulfanyl)propylamine + putrescine = S-methyl-5'-thioadenosine + spermidine + H(+). Its pathway is amine and polyamine biosynthesis; spermidine biosynthesis; spermidine from putrescine: step 1/1. In terms of biological role, catalyzes the irreversible transfer of a propylamine group from the amino donor S-adenosylmethioninamine (decarboxy-AdoMet) to putrescine (1,4-diaminobutane) to yield spermidine. This is Polyamine aminopropyltransferase from Pyrobaculum islandicum (strain DSM 4184 / JCM 9189 / GEO3).